Reading from the N-terminus, the 294-residue chain is NAD kinase (294 aa).

D74 acts as the Proton acceptor in catalysis. NAD(+)-binding positions include 74–75, K79, 149–150, D179, 190–195, and A214; these read DG, NE, and TGYSLS.

This sequence belongs to the NAD kinase family. Requires a divalent metal cation as cofactor.

It localises to the cytoplasm. It carries out the reaction NAD(+) + ATP = ADP + NADP(+) + H(+). Functionally, involved in the regulation of the intracellular balance of NAD and NADP, and is a key enzyme in the biosynthesis of NADP. Catalyzes specifically the phosphorylation on 2'-hydroxyl of the adenosine moiety of NAD to yield NADP. The sequence is that of NAD kinase from Christiangramia forsetii (strain DSM 17595 / CGMCC 1.15422 / KT0803) (Gramella forsetii).